The chain runs to 613 residues: ADP-ribosylation factor-binding protein GGA2 (613 aa).

The VHS domain maps to 33-163 (ATDPSMSEQD…MLKKQGIIKQ (131 aa)). The GAT domain occupies 188–315 (DEEKSKLLTR…GVLLYKQVME (128 aa)). Residues 316 to 483 (GRVTFGNRVT…VFVPLESVKP (168 aa)) are unstructured hinge. 2 disordered regions span residues 389 to 414 (GQNCCEEKRNPSSSTLPGGGVQNPSA) and 435 to 466 (SQKSVPKEVPPGTKSSPGWSWEAGPLAPSPSS). Positions 399–414 (PSSSTLPGGGVQNPSA) are enriched in polar residues. Ser400 is subject to Phosphoserine. In terms of domain architecture, GAE spans 484–605 (SSLPPLIVYD…SEVGEVKDFP (122 aa)).

This sequence belongs to the GGA protein family. In terms of assembly, monomer. Interacts with NECAP1, TSG101, UBC and AFTPH/aftiphilin. Interacts with CNST. Interacts with GGA1 and GGA3. Binds to clathrin and activated ARFs, such as ARF1, ARF5 and ARF6. Binds RABEP1 and RABGEF1. Interacts with the type-I membrane proteins LRP3, M6PR/CD-MPR, IGF2R/CI-MPR and BACE1. Interacts (via N-terminal VHS domain) with SORL1/sorLA and SORT1 (via C-terminal cytosolic domain). Binds the accessory proteins CCDC91, P200, SYNRG, EPN4 and NECAP2. Interacts with ADRA2B. Interacts (via VHS domain) with PIK4B; the interaction is important for PIK4B location at the Golgi apparatus membrane. Ubiquitinated. In terms of tissue distribution, ubiquitously expressed.

It is found in the golgi apparatus. Its subcellular location is the trans-Golgi network membrane. The protein resides in the endosome membrane. The protein localises to the early endosome membrane. Functionally, plays a role in protein sorting and trafficking between the trans-Golgi network (TGN) and endosomes. Mediates the ARF-dependent recruitment of clathrin to the TGN and binds ubiquitinated proteins and membrane cargo molecules with a cytosolic acidic cluster-dileucine (DXXLL) motif. Mediates export of the GPCR receptor ADRA2B to the cell surface. Regulates retrograde transport of phosphorylated form of BACE1 from endosomes to the trans-Golgi network. The chain is ADP-ribosylation factor-binding protein GGA2 (GGA2) from Homo sapiens (Human).